The primary structure comprises 310 residues: Ribosomal RNA small subunit methyltransferase H (310 aa).

S-adenosyl-L-methionine is bound by residues 32 to 34 (GGH), Asp-52, Phe-79, Asp-100, and Gln-107.

It belongs to the methyltransferase superfamily. RsmH family.

It is found in the cytoplasm. The enzyme catalyses cytidine(1402) in 16S rRNA + S-adenosyl-L-methionine = N(4)-methylcytidine(1402) in 16S rRNA + S-adenosyl-L-homocysteine + H(+). Its function is as follows. Specifically methylates the N4 position of cytidine in position 1402 (C1402) of 16S rRNA. This Bacillus cereus (strain G9842) protein is Ribosomal RNA small subunit methyltransferase H.